Consider the following 121-residue polypeptide: Ribosome-binding factor A (121 aa).

The protein belongs to the RbfA family. As to quaternary structure, monomer. Binds 30S ribosomal subunits, but not 50S ribosomal subunits or 70S ribosomes.

Its subcellular location is the cytoplasm. In terms of biological role, one of several proteins that assist in the late maturation steps of the functional core of the 30S ribosomal subunit. Associates with free 30S ribosomal subunits (but not with 30S subunits that are part of 70S ribosomes or polysomes). Required for efficient processing of 16S rRNA. May interact with the 5'-terminal helix region of 16S rRNA. The chain is Ribosome-binding factor A from Brevibacillus brevis (strain 47 / JCM 6285 / NBRC 100599).